The sequence spans 350 residues: Eukaryotic translation initiation factor 3 subunit I (350 aa).

WD repeat units follow at residues glycine 8 to glutamate 49, histidine 51 to threonine 89, aspartate 91 to serine 135, serine 149 to serine 188, glutamate 198 to lysine 240, and glycine 296 to leucine 335.

This sequence belongs to the eIF-3 subunit I family. As to quaternary structure, component of the eukaryotic translation initiation factor 3 (eIF-3) complex.

Its subcellular location is the cytoplasm. Its function is as follows. Component of the eukaryotic translation initiation factor 3 (eIF-3) complex, which is involved in protein synthesis of a specialized repertoire of mRNAs and, together with other initiation factors, stimulates binding of mRNA and methionyl-tRNAi to the 40S ribosome. The eIF-3 complex specifically targets and initiates translation of a subset of mRNAs involved in cell proliferation. The chain is Eukaryotic translation initiation factor 3 subunit I from Candida albicans (strain SC5314 / ATCC MYA-2876) (Yeast).